Reading from the N-terminus, the 317-residue chain is Zinc transporter ZIP3 (317 aa).

Topologically, residues 1-3 (MTK) are extracellular. A helical transmembrane segment spans residues 4–24 (LLVAKVLCMVGVFFFMLLGSL). The Cytoplasmic portion of the chain corresponds to 25 to 42 (LPVKVIEADLEKAHRSKK). Residues 43–63 (VLSLCNTFGGGVFLATCFNAL) traverse the membrane as a helical segment. The Extracellular portion of the chain corresponds to 64–85 (LPAVRDKLQQVLSLGHISTDYP). A helical transmembrane segment spans residues 86-106 (LAETLMMVGFFLTVFVEQLVL). Residues 107–172 (TFRRERPPFI…RELGRPGPLR (66 aa)) lie on the Cytoplasmic side of the membrane. Phosphoserine occurs at positions 125 and 129. Residues 173-193 (LLSLVFALSAHSVFEGLALGL) traverse the membrane as a helical segment. Topologically, residues 194–199 (QEEGER) are extracellular. Residues 200–220 (VVSLFVGVAIHETLVAVALGI) form a helical membrane-spanning segment. Over 221-232 (SMARSAVPLRDA) the chain is Cytoplasmic. Residues 233 to 253 (AKLAVTVSAMIPVGIGLGLGI) form a helical membrane-spanning segment. Residues 254–265 (ESARSVASSVAS) are Extracellular-facing. The chain crosses the membrane as a helical span at residues 266–286 (ALLQGLAGGTFLFVTFLEILA). Topologically, residues 287–294 (KELEERSE) are cytoplasmic. The chain crosses the membrane as a helical span at residues 295 to 315 (QLLKVLFLVLGYAVLAGMVFL). Residues 316-317 (KW) are Extracellular-facing.

Belongs to the ZIP transporter (TC 2.A.5) family. In terms of tissue distribution, highly expressed in the testes. Highly expressed in dentate gyrus granule cells of the hippocampus. Expressed in the mammary gland.

The protein resides in the cell membrane. It is found in the apical cell membrane. The catalysed reaction is Zn(2+)(in) = Zn(2+)(out). Functionally, transporter for the divalent cation Zn(2+). Mediates the influx of Zn(2+) into cells from extracellular space. Controls Zn(2+) accumulation into dentate gyrus granule cells in the hippocampus. Mediates Zn(2+) reuptake from the secreted milk within the alveolar lumen. This Mus musculus (Mouse) protein is Zinc transporter ZIP3 (Slc39a3).